The chain runs to 228 residues: 7-cyano-7-deazaguanine synthase (228 aa).

Residue 9–19 (YSGGLDSTTCM) participates in ATP binding. Residues Cys189, Cys199, Cys202, and Cys205 each coordinate Zn(2+).

It belongs to the QueC family. Zn(2+) serves as cofactor.

It catalyses the reaction 7-carboxy-7-deazaguanine + NH4(+) + ATP = 7-cyano-7-deazaguanine + ADP + phosphate + H2O + H(+). The protein operates within purine metabolism; 7-cyano-7-deazaguanine biosynthesis. Catalyzes the ATP-dependent conversion of 7-carboxy-7-deazaguanine (CDG) to 7-cyano-7-deazaguanine (preQ(0)). The sequence is that of 7-cyano-7-deazaguanine synthase from Geotalea uraniireducens (strain Rf4) (Geobacter uraniireducens).